A 324-amino-acid chain; its full sequence is Alkanal monooxygenase beta chain (324 aa).

It belongs to the bacterial luciferase oxidoreductase family. Heterodimer of an alpha and a beta chain.

The enzyme catalyses a long-chain fatty aldehyde + FMNH2 + O2 = a long-chain fatty acid + hnu + FMN + H2O + 2 H(+). Its function is as follows. Light-emitting reaction in luminous bacteria. The specific role of the beta subunit is unknown, but it is absolutely required for bioluminescence activity. The polypeptide is Alkanal monooxygenase beta chain (luxB) (Photorhabdus laumondii subsp. laumondii (strain DSM 15139 / CIP 105565 / TT01) (Photorhabdus luminescens subsp. laumondii)).